Here is a 374-residue protein sequence, read N- to C-terminus: Lipoyl synthase, mitochondrial (374 aa).

Residues cysteine 101, cysteine 106, cysteine 112, cysteine 132, cysteine 136, cysteine 139, and serine 347 each contribute to the [4Fe-4S] cluster site. The region spanning 117 to 336 (ENGTQTATIM…EERGNDLGFL (220 aa)) is the Radical SAM core domain.

The protein belongs to the radical SAM superfamily. Lipoyl synthase family. Requires [4Fe-4S] cluster as cofactor.

The protein resides in the mitochondrion. The enzyme catalyses [[Fe-S] cluster scaffold protein carrying a second [4Fe-4S](2+) cluster] + N(6)-octanoyl-L-lysyl-[protein] + 2 oxidized [2Fe-2S]-[ferredoxin] + 2 S-adenosyl-L-methionine + 4 H(+) = [[Fe-S] cluster scaffold protein] + N(6)-[(R)-dihydrolipoyl]-L-lysyl-[protein] + 4 Fe(3+) + 2 hydrogen sulfide + 2 5'-deoxyadenosine + 2 L-methionine + 2 reduced [2Fe-2S]-[ferredoxin]. The protein operates within protein modification; protein lipoylation via endogenous pathway; protein N(6)-(lipoyl)lysine from octanoyl-[acyl-carrier-protein]: step 2/2. Its function is as follows. Catalyzes the radical-mediated insertion of two sulfur atoms into the C-6 and C-8 positions of the octanoyl moiety bound to the lipoyl domains of lipoate-dependent enzymes, thereby converting the octanoylated domains into lipoylated derivatives. The chain is Lipoyl synthase, mitochondrial from Drosophila pseudoobscura pseudoobscura (Fruit fly).